Reading from the N-terminus, the 459-residue chain is Sulfide:quinone oxidoreductase, mitochondrial (459 aa).

A mitochondrion-targeting transit peptide spans 1 to 24 (MLTLNSTIKSVTGSFQSASMLARF). 35-39 (GGGSA) contributes to the FAD binding site. Catalysis depends on cysteine persulfide intermediate residues Cys204 and Cys383.

Belongs to the SQRD family. The cofactor is FAD.

The protein resides in the mitochondrion. Catalyzes the oxidation of hydrogen sulfide, with the help of a quinone. This is Sulfide:quinone oxidoreductase, mitochondrial (hmt2) from Schizosaccharomyces pombe (strain 972 / ATCC 24843) (Fission yeast).